A 201-amino-acid polypeptide reads, in one-letter code: 2-phospho-L-lactate guanylyltransferase (201 aa).

It belongs to the CofC family. In terms of assembly, homodimer.

It catalyses the reaction (2S)-2-phospholactate + GTP + H(+) = (2S)-lactyl-2-diphospho-5'-guanosine + diphosphate. Its pathway is cofactor biosynthesis; coenzyme F420 biosynthesis. Guanylyltransferase that catalyzes the activation of (2S)-2-phospholactate (2-PL) as (2S)-lactyl-2-diphospho-5'-guanosine, via the condensation of 2-PL with GTP. It is involved in the biosynthesis of coenzyme F420, a hydride carrier cofactor. The sequence is that of 2-phospho-L-lactate guanylyltransferase from Natronomonas pharaonis (strain ATCC 35678 / DSM 2160 / CIP 103997 / JCM 8858 / NBRC 14720 / NCIMB 2260 / Gabara) (Halobacterium pharaonis).